Consider the following 37-residue polypeptide: Large ribosomal subunit protein bL36 (37 aa).

The protein belongs to the bacterial ribosomal protein bL36 family.

In Deinococcus geothermalis (strain DSM 11300 / CIP 105573 / AG-3a), this protein is Large ribosomal subunit protein bL36.